The chain runs to 288 residues: Pantothenate synthetase (288 aa).

30–37 (MGALHEGH) contributes to the ATP binding site. H37 functions as the Proton donor in the catalytic mechanism. Q61 is a binding site for (R)-pantoate. Q61 is a beta-alanine binding site. 147–150 (GEKD) contacts ATP. Q153 provides a ligand contact to (R)-pantoate. ATP-binding positions include L176 and 184-187 (ISSR).

It belongs to the pantothenate synthetase family. As to quaternary structure, homodimer.

The protein localises to the cytoplasm. The enzyme catalyses (R)-pantoate + beta-alanine + ATP = (R)-pantothenate + AMP + diphosphate + H(+). Its pathway is cofactor biosynthesis; (R)-pantothenate biosynthesis; (R)-pantothenate from (R)-pantoate and beta-alanine: step 1/1. Its function is as follows. Catalyzes the condensation of pantoate with beta-alanine in an ATP-dependent reaction via a pantoyl-adenylate intermediate. The sequence is that of Pantothenate synthetase from Prosthecochloris aestuarii (strain DSM 271 / SK 413).